A 396-amino-acid chain; its full sequence is Phosphoglycerate kinase (396 aa).

Residues 21–23, Arg36, 59–62, Arg119, and Arg156 contribute to the substrate site; these read DFN and HLGK. ATP-binding positions include Lys206, Gly294, Glu325, and 352–355; that span reads GGDS.

This sequence belongs to the phosphoglycerate kinase family. Monomer.

The protein resides in the cytoplasm. It carries out the reaction (2R)-3-phosphoglycerate + ATP = (2R)-3-phospho-glyceroyl phosphate + ADP. Its pathway is carbohydrate degradation; glycolysis; pyruvate from D-glyceraldehyde 3-phosphate: step 2/5. This Listeria monocytogenes serovar 1/2a (strain ATCC BAA-679 / EGD-e) protein is Phosphoglycerate kinase.